Consider the following 317-residue polypeptide: Tyrosine--tRNA ligase (317 aa).

Tyr-33 contacts L-tyrosine. The 'HIGH' region signature appears at 38 to 46; it reads PSGKIHMGH. 4 residues coordinate L-tyrosine: Tyr-155, Gln-159, Asp-162, and Gln-177. The short motif at 211–215 is the 'KMSKS' region element; that stretch reads KMASS. Ser-214 serves as a coordination point for ATP.

The protein belongs to the class-I aminoacyl-tRNA synthetase family. TyrS type 3 subfamily. Homodimer.

It is found in the cytoplasm. It catalyses the reaction tRNA(Tyr) + L-tyrosine + ATP = L-tyrosyl-tRNA(Tyr) + AMP + diphosphate + H(+). Functionally, catalyzes the attachment of tyrosine to tRNA(Tyr) in a two-step reaction: tyrosine is first activated by ATP to form Tyr-AMP and then transferred to the acceptor end of tRNA(Tyr). This Methanosarcina barkeri (strain Fusaro / DSM 804) protein is Tyrosine--tRNA ligase.